Consider the following 461-residue polypeptide: Cysteine--tRNA ligase (461 aa).

A Zn(2+)-binding site is contributed by Cys28. The short motif at 30 to 40 (ITVYDLCHIGH) is the 'HIGH' region element. Zn(2+) contacts are provided by Cys209, His234, and Glu238. Positions 266–270 (KMSKS) match the 'KMSKS' region motif. Lys269 contacts ATP.

Belongs to the class-I aminoacyl-tRNA synthetase family. In terms of assembly, monomer. Zn(2+) is required as a cofactor.

The protein resides in the cytoplasm. The catalysed reaction is tRNA(Cys) + L-cysteine + ATP = L-cysteinyl-tRNA(Cys) + AMP + diphosphate. This is Cysteine--tRNA ligase from Escherichia coli O6:K15:H31 (strain 536 / UPEC).